The sequence spans 699 residues: Elongation factor G (699 aa).

Positions 8–288 (EDYRNFGIMA…AVVDYLPSPI (281 aa)) constitute a tr-type G domain. GTP-binding positions include 17 to 24 (AHIDAGKT), 86 to 90 (DTPGH), and 140 to 143 (NKMD).

It belongs to the TRAFAC class translation factor GTPase superfamily. Classic translation factor GTPase family. EF-G/EF-2 subfamily.

The protein localises to the cytoplasm. Catalyzes the GTP-dependent ribosomal translocation step during translation elongation. During this step, the ribosome changes from the pre-translocational (PRE) to the post-translocational (POST) state as the newly formed A-site-bound peptidyl-tRNA and P-site-bound deacylated tRNA move to the P and E sites, respectively. Catalyzes the coordinated movement of the two tRNA molecules, the mRNA and conformational changes in the ribosome. This Rhizobium meliloti (strain 1021) (Ensifer meliloti) protein is Elongation factor G.